Reading from the N-terminus, the 191-residue chain is Adenine phosphoribosyltransferase (191 aa).

It belongs to the purine/pyrimidine phosphoribosyltransferase family. As to quaternary structure, homodimer.

It localises to the cytoplasm. It catalyses the reaction AMP + diphosphate = 5-phospho-alpha-D-ribose 1-diphosphate + adenine. It functions in the pathway purine metabolism; AMP biosynthesis via salvage pathway; AMP from adenine: step 1/1. Functionally, catalyzes a salvage reaction resulting in the formation of AMP, that is energically less costly than de novo synthesis. The polypeptide is Adenine phosphoribosyltransferase (Bordetella bronchiseptica (strain ATCC BAA-588 / NCTC 13252 / RB50) (Alcaligenes bronchisepticus)).